A 257-amino-acid polypeptide reads, in one-letter code: Imidazole glycerol phosphate synthase subunit HisF (257 aa).

Residues Asp-11 and Asp-130 contribute to the active site.

The protein belongs to the HisA/HisF family. In terms of assembly, heterodimer of HisH and HisF.

Its subcellular location is the cytoplasm. It catalyses the reaction 5-[(5-phospho-1-deoxy-D-ribulos-1-ylimino)methylamino]-1-(5-phospho-beta-D-ribosyl)imidazole-4-carboxamide + L-glutamine = D-erythro-1-(imidazol-4-yl)glycerol 3-phosphate + 5-amino-1-(5-phospho-beta-D-ribosyl)imidazole-4-carboxamide + L-glutamate + H(+). The protein operates within amino-acid biosynthesis; L-histidine biosynthesis; L-histidine from 5-phospho-alpha-D-ribose 1-diphosphate: step 5/9. IGPS catalyzes the conversion of PRFAR and glutamine to IGP, AICAR and glutamate. The HisF subunit catalyzes the cyclization activity that produces IGP and AICAR from PRFAR using the ammonia provided by the HisH subunit. The protein is Imidazole glycerol phosphate synthase subunit HisF of Aliivibrio fischeri (strain MJ11) (Vibrio fischeri).